The primary structure comprises 158 residues: MPLYEHVFLARQDASAQQVEELTTQITGVIEGLGGKVTKTESWGLRSLTYRMNKNRKAHFVLLNIDGPAAVVSEIERQERINEDVIRYLTVRVDEHEEGPSAMMRKADRDRERDDRGPREGGFRGDREGRGDRDGFRGDRGPRRPREDADAPAAAVEE.

Over residues 92–149 (RVDEHEEGPSAMMRKADRDRERDDRGPREGGFRGDREGRGDRDGFRGDRGPRRPREDA) the composition is skewed to basic and acidic residues. Residues 92–158 (RVDEHEEGPS…ADAPAAAVEE (67 aa)) are disordered.

The protein belongs to the bacterial ribosomal protein bS6 family.

In terms of biological role, binds together with bS18 to 16S ribosomal RNA. The chain is Small ribosomal subunit protein bS6 from Rhodopseudomonas palustris (strain ATCC BAA-98 / CGA009).